A 469-amino-acid polypeptide reads, in one-letter code: Ribulose bisphosphate carboxylase large chain (469 aa).

The residue at position 5 (Lys5) is an N6,N6,N6-trimethyllysine. Residues Asn114 and Thr164 each coordinate substrate. The active-site Proton acceptor is the Lys166. A substrate-binding site is contributed by Lys168. Mg(2+) contacts are provided by Lys192, Asp194, and Glu195. Lys192 bears the N6-carboxylysine mark. His285 acts as the Proton acceptor in catalysis. Residues Arg286, His318, and Ser370 each coordinate substrate.

Belongs to the RuBisCO large chain family. Type I subfamily. As to quaternary structure, heterohexadecamer of 8 large chains and 8 small chains; disulfide-linked. The disulfide link is formed within the large subunit homodimers. Mg(2+) is required as a cofactor. In terms of processing, the disulfide bond which can form in the large chain dimeric partners within the hexadecamer appears to be associated with oxidative stress and protein turnover.

Its subcellular location is the plastid. The protein resides in the chloroplast. It carries out the reaction 2 (2R)-3-phosphoglycerate + 2 H(+) = D-ribulose 1,5-bisphosphate + CO2 + H2O. The catalysed reaction is D-ribulose 1,5-bisphosphate + O2 = 2-phosphoglycolate + (2R)-3-phosphoglycerate + 2 H(+). RuBisCO catalyzes two reactions: the carboxylation of D-ribulose 1,5-bisphosphate, the primary event in carbon dioxide fixation, as well as the oxidative fragmentation of the pentose substrate in the photorespiration process. Both reactions occur simultaneously and in competition at the same active site. In Nicandra physalodes (Apple-of-Peru), this protein is Ribulose bisphosphate carboxylase large chain.